A 75-amino-acid polypeptide reads, in one-letter code: Small ribosomal subunit protein bS18 (75 aa).

The protein belongs to the bacterial ribosomal protein bS18 family. Part of the 30S ribosomal subunit. Forms a tight heterodimer with protein bS6.

Its function is as follows. Binds as a heterodimer with protein bS6 to the central domain of the 16S rRNA, where it helps stabilize the platform of the 30S subunit. The sequence is that of Small ribosomal subunit protein bS18 from Shewanella amazonensis (strain ATCC BAA-1098 / SB2B).